The chain runs to 2104 residues: Myosin type-2 heavy chain 2 (2104 aa).

Residues D35–P85 enclose the Myosin N-terminal SH3-like domain. The 679-residue stretch at D89–N767 folds into the Myosin motor domain. Residue G182 to T189 coordinates ATP. An actin-binding region spans residues L646–F660. Residues L829–R2104 adopt a coiled-coil conformation. 2 disordered regions span residues N1245–N1278 and M1398–S1426. A compositionally biased stretch (polar residues) spans R1246 to H1259. Residues S1261 to N1278 are compositionally biased toward basic and acidic residues. Positions S1409–K1424 are enriched in polar residues. The residue at position 1421 (S1421) is a Phosphoserine.

The protein belongs to the TRAFAC class myosin-kinesin ATPase superfamily. Myosin family. Binds to cdc4 and rlc1.

Its function is as follows. Stabilizes the F-actin cables forming the F-actin ring that surrounds the nucleus during interphase. May work in conjunction with myo2. This is Myosin type-2 heavy chain 2 (myo3) from Schizosaccharomyces pombe (strain 972 / ATCC 24843) (Fission yeast).